The primary structure comprises 100 residues: Small ribosomal subunit protein uS14c (100 aa).

Belongs to the universal ribosomal protein uS14 family. Part of the 30S ribosomal subunit.

It is found in the plastid. The protein localises to the chloroplast. Its function is as follows. Binds 16S rRNA, required for the assembly of 30S particles. The chain is Small ribosomal subunit protein uS14c from Guillardia theta (Cryptophyte).